Here is a 586-residue protein sequence, read N- to C-terminus: Phosphatidylinositol-3-phosphatase SAC1-A (586 aa).

Residues 1–519 (MANAYERFNL…TPLHVKKDWK (519 aa)) lie on the Cytoplasmic side of the membrane. In terms of domain architecture, SAC spans 121-450 (INNVLNTDGF…ANACAKQYAG (330 aa)). An essential for phosphatidylinositol-4-phosphate phosphatase activity region spans residues 451-586 (TGALKTDFTR…PKLVQKEKMD (136 aa)). The chain crosses the membrane as a helical span at residues 520-540 (FLLLPVIMVVAFSMCIICLLM). At 541–547 (AGDTWTE) the chain is on the lumenal side. Residues 548 to 568 (TLAYVLFWGMASALTAAVIVV) traverse the membrane as a helical segment. Residues 569-586 (NGREFVDAPKLVQKEKMD) are Cytoplasmic-facing.

The protein resides in the endoplasmic reticulum membrane. The protein localises to the golgi apparatus membrane. It carries out the reaction a 1,2-diacyl-sn-glycero-3-phospho-(1D-myo-inositol-3-phosphate) + H2O = a 1,2-diacyl-sn-glycero-3-phospho-(1D-myo-inositol) + phosphate. The enzyme catalyses a 1,2-diacyl-sn-glycero-3-phospho-(1D-myo-inositol 4-phosphate) + H2O = a 1,2-diacyl-sn-glycero-3-phospho-(1D-myo-inositol) + phosphate. In terms of biological role, phosphoinositide phosphatase which catalyzes the hydrolysis of phosphatidylinositol 4-phosphate (PtdIns(4)P), phosphatidylinositol 3-phosphate (PtdIns(3)P) and has low activity towards phosphatidylinositol-3,5-bisphosphate (PtdIns(3,5)P2). This chain is Phosphatidylinositol-3-phosphatase SAC1-A (sacm1la), found in Danio rerio (Zebrafish).